A 217-amino-acid chain; its full sequence is Protein-L-isoaspartate O-methyltransferase (217 aa).

The active site involves Ser-65.

It belongs to the methyltransferase superfamily. L-isoaspartyl/D-aspartyl protein methyltransferase family.

The protein resides in the cytoplasm. The enzyme catalyses [protein]-L-isoaspartate + S-adenosyl-L-methionine = [protein]-L-isoaspartate alpha-methyl ester + S-adenosyl-L-homocysteine. Catalyzes the methyl esterification of L-isoaspartyl residues in peptides and proteins that result from spontaneous decomposition of normal L-aspartyl and L-asparaginyl residues. It plays a role in the repair and/or degradation of damaged proteins. This Chlorobium limicola (strain DSM 245 / NBRC 103803 / 6330) protein is Protein-L-isoaspartate O-methyltransferase.